Here is a 45-residue protein sequence, read N- to C-terminus: MEAVFLLAKLPEAYQIFDPLVDVLPVIPVFFLALAFVWQAAVGFK.

Residues 1–8 (MEAVFLLA) constitute a propeptide that is removed on maturation. A helical membrane pass occupies residues 24–44 (LPVIPVFFLALAFVWQAAVGF).

It belongs to the PsbK family. As to quaternary structure, PSII is composed of 1 copy each of membrane proteins PsbA, PsbB, PsbC, PsbD, PsbE, PsbF, PsbH, PsbI, PsbJ, PsbK, PsbL, PsbM, PsbT, PsbX, PsbY, PsbZ, Psb30/Ycf12, peripheral proteins PsbO, CyanoQ (PsbQ), PsbU, PsbV and a large number of cofactors. It forms dimeric complexes.

Its subcellular location is the cellular thylakoid membrane. One of the components of the core complex of photosystem II (PSII). PSII is a light-driven water:plastoquinone oxidoreductase that uses light energy to abstract electrons from H(2)O, generating O(2) and a proton gradient subsequently used for ATP formation. It consists of a core antenna complex that captures photons, and an electron transfer chain that converts photonic excitation into a charge separation. This chain is Photosystem II reaction center protein K, found in Crocosphaera subtropica (strain ATCC 51142 / BH68) (Cyanothece sp. (strain ATCC 51142)).